A 274-amino-acid chain; its full sequence is 3-methyl-2-oxobutanoate hydroxymethyltransferase (274 aa).

The Mg(2+) site is built by Asp-46 and Asp-85. Residues Asp-46–Ser-47, Asp-85, and Lys-115 each bind 3-methyl-2-oxobutanoate. Glu-117 is a Mg(2+) binding site. Glu-184 acts as the Proton acceptor in catalysis.

It belongs to the PanB family. Homodecamer; pentamer of dimers. Mg(2+) is required as a cofactor.

It localises to the cytoplasm. The catalysed reaction is 3-methyl-2-oxobutanoate + (6R)-5,10-methylene-5,6,7,8-tetrahydrofolate + H2O = 2-dehydropantoate + (6S)-5,6,7,8-tetrahydrofolate. Its pathway is cofactor biosynthesis; coenzyme A biosynthesis. Functionally, catalyzes the reversible reaction in which hydroxymethyl group from 5,10-methylenetetrahydrofolate is transferred onto alpha-ketoisovalerate to form ketopantoate. The polypeptide is 3-methyl-2-oxobutanoate hydroxymethyltransferase (Halobacterium salinarum (strain ATCC 29341 / DSM 671 / R1)).